Here is a 708-residue protein sequence, read N- to C-terminus: MDKYDVIKAIGQGAFGKAYLAKGKSDSKHCVIKEINFEKMPIQEKEASKKEVILLEKMKHPNIVAFFNSFQENGRLFIVMEYCDGGDLMKRINRQRGVLFSEDQILGWFVQISLGLKHIHDRKILHRDIKAQNIFLSKNGMVAKLGDFGIARVLNNSMELARTCIGTPYYLSPEICQNKPYNNKTDIWSLGCVLYELCTLKHPFEGNNLQQLVLKICQAHFAPISPGFSRELHSLISQLFQVSPRDRPSINSILKRPFLENLIPKYLTPEVIQEEFSHMLICRAGAPASRHAGKVVQKCKIQKVRFQGKCPPRSRISVPIKRNAILHRNEWRPPAGAQKARSIKMIERPKIAAVCGHYDYYYAQLDMLRRRAHKPSYHPIPQENTGVEDYGQETRHGPSPSQWPAEYLQRKFEAQQYKLKVEKQLGLRPSSAEPNYNQRQELRSNGEEPRFQELPFRKNEMKEQEYWKQLEEIRQQYHNDMKEIRKKMGREPEENSKISHKTYLVKKSNLPVHQDASEGEAPVQMEFRSCCPGWSAMARSWLTATSASQDIEKDLKQMRLQNTKESKNPEQKYKAKKGVKFEINLDKCISDENILQEEEAMDIPNETLTFEDGMKFKEYECVKEHGDYTDKAFEKLHCPEAGFSTQTVAAVGNRRQWDGGAPQTLLQMMAVADITSTCPTGPDSESVLSVSRQEGKTKDPYSPVLILM.

In terms of domain architecture, Protein kinase spans 4–259 (YDVIKAIGQG…INSILKRPFL (256 aa)). ATP is bound by residues 10-18 (IGQGAFGKA) and Lys-33. The active-site Proton acceptor is the Asp-128. 2 disordered regions span residues 376 to 403 (SYHP…PSQW) and 423 to 454 (KQLG…FQEL). Positions 440 to 454 (QELRSNGEEPRFQEL) are enriched in basic and acidic residues.

It belongs to the protein kinase superfamily. NEK Ser/Thr protein kinase family. NIMA subfamily. It depends on Mg(2+) as a cofactor.

It is found in the cell projection. Its subcellular location is the cilium. The protein localises to the flagellum. It catalyses the reaction L-seryl-[protein] + ATP = O-phospho-L-seryl-[protein] + ADP + H(+). It carries out the reaction L-threonyl-[protein] + ATP = O-phospho-L-threonyl-[protein] + ADP + H(+). The polypeptide is Serine/threonine-protein kinase Nek5 (NEK5) (Homo sapiens (Human)).